Consider the following 61-residue polypeptide: Small ribosomal subunit protein uS14 (61 aa).

Positions 24, 27, 40, and 43 each coordinate Zn(2+).

The protein belongs to the universal ribosomal protein uS14 family. Zinc-binding uS14 subfamily. Part of the 30S ribosomal subunit. Contacts proteins S3 and S10. It depends on Zn(2+) as a cofactor.

In terms of biological role, binds 16S rRNA, required for the assembly of 30S particles and may also be responsible for determining the conformation of the 16S rRNA at the A site. The chain is Small ribosomal subunit protein uS14 from Brevibacillus brevis (strain 47 / JCM 6285 / NBRC 100599).